A 265-amino-acid chain; its full sequence is Gap junction beta-4 protein (265 aa).

Residues 2-13 (NWGFLQGILSGV) lie within the membrane without spanning it. Topologically, residues 14–20 (NKYSTAL) are cytoplasmic. A helical transmembrane segment spans residues 21–40 (GRIWLSVVFIFRVLVYVVAA). Residues 41 to 73 (EEVWDDEQKDFICNTKQPGCPNVCYDEFFPVSH) lie on the Extracellular side of the membrane. 3 disulfide bridges follow: Cys53–Cys175, Cys60–Cys169, and Cys64–Cys164. Residues 74–94 (VRLWALQLILVTCPSLLVVMH) form a helical membrane-spanning segment. Topologically, residues 95–130 (VAYREERERKHRLKHGPDAPALYSNLSKKRGGLWWT) are cytoplasmic. Residues 131 to 151 (YLLSLIFKAAVDSGFLYIFHC) form a helical membrane-spanning segment. At 152 to 184 (IYKDYDMPRVVACSVQPCPHTVDCYISRPTEKK) the chain is on the extracellular side. The chain crosses the membrane as a helical span at residues 185–205 (VFTYFMVVTAAICILLNLSEV). At 206 to 265 (AYLVGKRCMEVFRPRRQKTSRRHQLPDTCPPYVISKGHPQDESTVLTKAGMATVDAGVYP) the chain is on the cytoplasmic side.

It belongs to the connexin family. Beta-type (group I) subfamily. As to quaternary structure, a hemichannel or connexon is composed of a hexamer of connexins. A functional gap junction is formed by the apposition of two hemichannels. Forms heteromeric channels with GJB2. Detected in adult heart, kidney, skin and cochlea, where it is detected in spiral ganglion, stria vascularis, spiral limbus and spiral ligament (at protein level).

The protein localises to the cell membrane. It localises to the cell junction. It is found in the gap junction. Structural component of gap junctions. Gap junctions are dodecameric channels that connect the cytoplasm of adjoining cells. They are formed by the docking of two hexameric hemichannels, one from each cell membrane. Small molecules and ions diffuse from one cell to a neighboring cell via the central pore. The protein is Gap junction beta-4 protein (Gjb4) of Rattus norvegicus (Rat).